Reading from the N-terminus, the 220-residue chain is Urease accessory protein UreF (220 aa).

The protein belongs to the UreF family. In terms of assembly, ureD, UreF and UreG form a complex that acts as a GTP-hydrolysis-dependent molecular chaperone, activating the urease apoprotein by helping to assemble the nickel containing metallocenter of UreC. The UreE protein probably delivers the nickel.

It localises to the cytoplasm. In terms of biological role, required for maturation of urease via the functional incorporation of the urease nickel metallocenter. This is Urease accessory protein UreF from Jannaschia sp. (strain CCS1).